Consider the following 124-residue polypeptide: Fluoride-specific ion channel FluC (124 aa).

Transmembrane regions (helical) follow at residues 4-24 (LLLV…ISIF), 35-55 (FGTL…YALG), 60-80 (ISPE…TTFS), and 102-122 (VVLN…LVFS). Residues G74 and T77 each contribute to the Na(+) site.

This sequence belongs to the fluoride channel Fluc/FEX (TC 1.A.43) family.

The protein resides in the cell inner membrane. It catalyses the reaction fluoride(in) = fluoride(out). Its activity is regulated as follows. Na(+) is not transported, but it plays an essential structural role and its presence is essential for fluoride channel function. In terms of biological role, fluoride-specific ion channel. Important for reducing fluoride concentration in the cell, thus reducing its toxicity. The polypeptide is Fluoride-specific ion channel FluC (Shewanella baltica (strain OS185)).